Reading from the N-terminus, the 452-residue chain is Histone acetyltransferase type B subunit 2 (452 aa).

6 WD repeats span residues 155–195 (YEDG…NSKE), 205–245 (HHTK…SDGS), 256–296 (HHDA…NKAA), 300–340 (KESR…TPIS), 344–384 (SHCD…DDLS), and 401–441 (GHSS…SNDE).

It belongs to the WD repeat RBAP46/RBAP48/MSI1 family. In terms of assembly, component of the HAT-B complex composed of at least HAT1 and HAT2. The HAT-B complex binds to histone H4 tail.

Its subcellular location is the cytoplasm. It is found in the nucleus. Functionally, regulatory subunit of the histone acetylase B (HAT-B) complex. The complex acetylates 'Lys-12' of histone H4 which is required for telomeric silencing. The chain is Histone acetyltransferase type B subunit 2 (HAT2) from Yarrowia lipolytica (strain CLIB 122 / E 150) (Yeast).